Consider the following 442-residue polypeptide: tRNA-2-methylthio-N(6)-dimethylallyladenosine synthase (442 aa).

Positions 3 to 120 constitute an MTTase N-terminal domain; sequence KKLYIETHGC…LPEMIDAARV (118 aa). 6 residues coordinate [4Fe-4S] cluster: Cys-12, Cys-49, Cys-83, Cys-157, Cys-161, and Cys-164. Residues 143 to 375 form the Radical SAM core domain; sequence RVDGPSAYVS…QHRLNQQGFE (233 aa). The TRAM domain occupies 378–442; that stretch reads RQMVGSIQRI…PHSLRGSLLQ (65 aa).

Belongs to the methylthiotransferase family. MiaB subfamily. As to quaternary structure, monomer. [4Fe-4S] cluster is required as a cofactor.

The protein localises to the cytoplasm. It carries out the reaction N(6)-dimethylallyladenosine(37) in tRNA + (sulfur carrier)-SH + AH2 + 2 S-adenosyl-L-methionine = 2-methylsulfanyl-N(6)-dimethylallyladenosine(37) in tRNA + (sulfur carrier)-H + 5'-deoxyadenosine + L-methionine + A + S-adenosyl-L-homocysteine + 2 H(+). Catalyzes the methylthiolation of N6-(dimethylallyl)adenosine (i(6)A), leading to the formation of 2-methylthio-N6-(dimethylallyl)adenosine (ms(2)i(6)A) at position 37 in tRNAs that read codons beginning with uridine. This is tRNA-2-methylthio-N(6)-dimethylallyladenosine synthase from Pseudomonas syringae pv. syringae (strain B728a).